Here is a 296-residue protein sequence, read N- to C-terminus: QLTTNFYSTSCPNLLSTVKSGVKSAVSSQPRMGASILRLFFHDCFVNGCDGSILLDDTSSFTGEQNAGPNRNSARGFTVINDIKSAVEKACPGVVSCADILAIAARDSVVQLGGPNWNVKVGRRDAKTASQAAANSNIPAPSMSLSQLISSFSAVGLSTRDMVALSGAHTIGQSRCVNFRARVYNETNINAAFATLRQRSCPRAAGSGDANLAPLDINSATSFDNSYFKNLMAQRGLLHSDQVLFNGGSTDSIVRGYSNSPSSFNSDFAAAMIKMGDISPLTGSSGEIRKVCGKTN.

At glutamine 1 the chain carries Pyrrolidone carboxylic acid. Intrachain disulfides connect cysteine 11–cysteine 91, cysteine 44–cysteine 49, cysteine 97–cysteine 292, and cysteine 176–cysteine 201. Residue histidine 42 is the Proton acceptor of the active site. Residues aspartate 43, valine 46, glycine 48, aspartate 50, and serine 52 each contribute to the Ca(2+) site. Residue proline 139 participates in substrate binding. Histidine 169 serves as a coordination point for heme b. Residue threonine 170 coordinates Ca(2+). Asparagine 185 carries an N-linked (GlcNAc...) asparagine glycan. The Ca(2+) site is built by aspartate 216, serine 219, and aspartate 224.

Belongs to the peroxidase family. Classical plant (class III) peroxidase subfamily. Requires Ca(2+) as cofactor. Heme b is required as a cofactor.

It catalyses the reaction 2 a phenolic donor + H2O2 = 2 a phenolic radical donor + 2 H2O. Functionally, removal of H(2)O(2), oxidation of toxic reductants, biosynthesis and degradation of lignin, suberization, auxin catabolism, response to environmental stresses such as wounding, pathogen attack and oxidative stress. These functions might be dependent on each isozyme/isoform in each plant tissue. The polypeptide is Peroxidase P7 (Brassica rapa subsp. rapa (Turnip)).